We begin with the raw amino-acid sequence, 330 residues long: Malate dehydrogenase (330 aa).

12–18 (GAAGQIG) contacts NAD(+). The substrate site is built by arginine 93 and arginine 99. Residues asparagine 106, glutamine 113, and 130 to 132 (VGN) each bind NAD(+). Residues asparagine 132 and arginine 163 each coordinate substrate. The Proton acceptor role is filled by histidine 188.

Belongs to the LDH/MDH superfamily. MDH type 2 family.

It carries out the reaction (S)-malate + NAD(+) = oxaloacetate + NADH + H(+). In terms of biological role, catalyzes the reversible oxidation of malate to oxaloacetate. This is Malate dehydrogenase from Legionella pneumophila subsp. pneumophila (strain Philadelphia 1 / ATCC 33152 / DSM 7513).